The chain runs to 279 residues: Urease accessory protein UreD (279 aa).

It belongs to the UreD family. In terms of assembly, ureD, UreF and UreG form a complex that acts as a GTP-hydrolysis-dependent molecular chaperone, activating the urease apoprotein by helping to assemble the nickel containing metallocenter of UreC. The UreE protein probably delivers the nickel.

Its subcellular location is the cytoplasm. Required for maturation of urease via the functional incorporation of the urease nickel metallocenter. This chain is Urease accessory protein UreD, found in Streptococcus thermophilus (strain CNRZ 1066).